The following is a 509-amino-acid chain: Protein OS-9 homolog (509 aa).

An N-terminal signal peptide occupies residues 1 to 23 (MRRQSRIVASLLVLACASSGAFA). Residues 64–74 (SPDLNDISEQT) are compositionally biased toward polar residues. Residues 64-91 (SPDLNDISEQTPLKDESEESIRDGSSGE) are disordered. A compositionally biased stretch (basic and acidic residues) spans 75-91 (PLKDESEESIRDGSSGE). N120 is a glycosylation site (N-linked (GlcNAc...) asparagine). The 141-residue stretch at 151–291 (GKCLYYISGW…LIYTPRLCND (141 aa)) folds into the MRH domain. Residues C153 and C166 are joined by a disulfide bond. A mannooligosaccharide derivative is bound by residues W160, W161, Q173, D246, R252, E273, and Y279. Cystine bridges form between C245/C277 and C260/C289. Residues 433 to 509 (GVVDTDEDEE…GSEEIFKDEL (77 aa)) form a disordered region. Acidic residues predominate over residues 436–451 (DTDEDEEDGYENEEGE). The segment covering 452 to 461 (TDKREQRENT) has biased composition (basic and acidic residues). Over residues 489-502 (RSEDGEDPDVDGSE) the composition is skewed to acidic residues. A Prevents secretion from ER motif is present at residues 506–509 (KDEL).

It belongs to the OS-9 family. Interacts with missfolded ER lumenal proteins.

Its subcellular location is the endoplasmic reticulum membrane. Lectin involved in the quality control of the secretory pathway. As a member of the endoplasmic reticulum-associated degradation lumenal (ERAD-L) surveillance system, targets misfolded endoplasmic reticulum lumenal glycoproteins for degradation. In Emericella nidulans (strain FGSC A4 / ATCC 38163 / CBS 112.46 / NRRL 194 / M139) (Aspergillus nidulans), this protein is Protein OS-9 homolog (yos9).